The sequence spans 278 residues: Large ribosomal subunit protein uL2 (278 aa).

Disordered stretches follow at residues 27-57 (STPE…QGGG) and 224-278 (VAMN…NKKR). The span at 258–278 (RSPKKASSKYIVRRRKTNKKR) shows a compositional bias: basic residues.

The protein belongs to the universal ribosomal protein uL2 family. In terms of assembly, part of the 50S ribosomal subunit. Forms a bridge to the 30S subunit in the 70S ribosome.

One of the primary rRNA binding proteins. Required for association of the 30S and 50S subunits to form the 70S ribosome, for tRNA binding and peptide bond formation. It has been suggested to have peptidyltransferase activity; this is somewhat controversial. Makes several contacts with the 16S rRNA in the 70S ribosome. This is Large ribosomal subunit protein uL2 from Streptomyces avermitilis (strain ATCC 31267 / DSM 46492 / JCM 5070 / NBRC 14893 / NCIMB 12804 / NRRL 8165 / MA-4680).